We begin with the raw amino-acid sequence, 337 residues long: Lipoyl synthase (337 aa).

7 residues coordinate [4Fe-4S] cluster: Cys81, Cys86, Cys92, Cys107, Cys111, Cys114, and Ser323. Residues 93 to 312 enclose the Radical SAM core domain; the sequence is FSHGTATFMI…EEYGNALGFS (220 aa).

It belongs to the radical SAM superfamily. Lipoyl synthase family. [4Fe-4S] cluster is required as a cofactor.

The protein localises to the cytoplasm. It catalyses the reaction [[Fe-S] cluster scaffold protein carrying a second [4Fe-4S](2+) cluster] + N(6)-octanoyl-L-lysyl-[protein] + 2 oxidized [2Fe-2S]-[ferredoxin] + 2 S-adenosyl-L-methionine + 4 H(+) = [[Fe-S] cluster scaffold protein] + N(6)-[(R)-dihydrolipoyl]-L-lysyl-[protein] + 4 Fe(3+) + 2 hydrogen sulfide + 2 5'-deoxyadenosine + 2 L-methionine + 2 reduced [2Fe-2S]-[ferredoxin]. It participates in protein modification; protein lipoylation via endogenous pathway; protein N(6)-(lipoyl)lysine from octanoyl-[acyl-carrier-protein]: step 2/2. Catalyzes the radical-mediated insertion of two sulfur atoms into the C-6 and C-8 positions of the octanoyl moiety bound to the lipoyl domains of lipoate-dependent enzymes, thereby converting the octanoylated domains into lipoylated derivatives. This Xanthomonas campestris pv. campestris (strain 8004) protein is Lipoyl synthase.